We begin with the raw amino-acid sequence, 55 residues long: MAKAVTVKIKLVSTADTGYFYVTKKNSRTQTEKLSFKKYDPVARKHVEFKEAKIK.

Belongs to the bacterial ribosomal protein bL33 family.

The polypeptide is Large ribosomal subunit protein bL33 (Methylobacterium nodulans (strain LMG 21967 / CNCM I-2342 / ORS 2060)).